Here is a 443-residue protein sequence, read N- to C-terminus: Glutamate-1-semialdehyde 2,1-aminomutase (443 aa).

Over residues 1-16 the composition is skewed to low complexity; sequence MSVNADSQHSNNSSHQ. A disordered region spans residues 1–22; the sequence is MSVNADSQHSNNSSHQASEKAF. Lys277 bears the N6-(pyridoxal phosphate)lysine mark.

The protein belongs to the class-III pyridoxal-phosphate-dependent aminotransferase family. HemL subfamily. Homodimer. Requires pyridoxal 5'-phosphate as cofactor.

Its subcellular location is the cytoplasm. The enzyme catalyses (S)-4-amino-5-oxopentanoate = 5-aminolevulinate. Its pathway is porphyrin-containing compound metabolism; protoporphyrin-IX biosynthesis; 5-aminolevulinate from L-glutamyl-tRNA(Glu): step 2/2. The protein is Glutamate-1-semialdehyde 2,1-aminomutase of Corynebacterium jeikeium (strain K411).